The chain runs to 549 residues: Sphingosine-1-phosphate transporter SPNS2 (549 aa).

Disordered stretches follow at residues 14 to 36 and 78 to 97; these read AEEEEADAERRRRRRGAQPGAGG and PGCAAAAKGPSAPQPKPASL. 11 helical membrane passes run 141–161, 169–189, 202–222, 229–249, 261–281, 320–340, 364–384, 398–418, 422–442, 466–486, and 507–527; these read GLLQSVFICSFMVAAPIFGYL, VILSCGIFFWSAVTFSSSFIP, LVGIGEASYSTIAPTIIGDLF, LMLSVFYFAIPLGSGLGYITG, WALRVSPVLGMITGTLILILV, LATSAVSFATGALGMWIPLYL, LIFGAITCFTGFLGVVTGAGA, LVCAVGMLGSAIFICLIFVAA, IVGAYICIFVGETLLFSNWAI, TSHLLGDAGSPYLIGFISDLI, and LCPFVVVLGGMFFLATALFFL.

This sequence belongs to the major facilitator superfamily. Spinster (TC 2.A.1.49) family. As to expression, expression is high in the lungs and liver, low in the lymph nodes, spleen and bone marrow, and very low but detectable in the thymus. Not expressed in red blood cells. Also expressed in the inner ear: expressed in the cochlea, both in the lateral wall and organ of Corti.

Its subcellular location is the cell membrane. It localises to the endosome membrane. It carries out the reaction sphing-4-enine 1-phosphate(in) = sphing-4-enine 1-phosphate(out). It catalyses the reaction sphinganine 1-phosphate(in) = sphinganine 1-phosphate(out). In terms of biological role, lipid transporter that specifically mediates export of sphingosine-1-phosphate (sphing-4-enine 1-phosphate, S1P) and sphinganine-1-phosphate in the lymph, thereby playing a role in lymphocyte trafficking. S1P is a bioactive signaling molecule that regulates many physiological processes important for the development and for the immune system. Regulates levels of S1P and the S1P gradient that exists between the high circulating concentrations of S1P and low tissue levels that control lymphocyte trafficking. Required for the egress of T-cells from lymph nodes during an immune response by mediating S1P secretion, which generates a gradient that enables activated T-cells to access lymph. Also required for the egress of immature B-cells from the bone marrow. In contrast, it does not mediate S1P release from red blood cells. Involved in auditory function: S1P release in the inner ear is required for maintenance of the endocochlear potential in the cochlea. In addition to export, also able to mediate S1P import. The chain is Sphingosine-1-phosphate transporter SPNS2 from Mus musculus (Mouse).